Reading from the N-terminus, the 125-residue chain is UPF0738 protein GTNG_0708 (125 aa).

The protein belongs to the UPF0738 family.

The protein is UPF0738 protein GTNG_0708 of Geobacillus thermodenitrificans (strain NG80-2).